The following is a 281-amino-acid chain: Protein NipSnap homolog 2 (281 aa).

The transit peptide at 1–27 directs the protein to the mitochondrion; it reads MAARVLLARGGLLRPAAQSAFLPGLRT.

The protein belongs to the NipSnap family. Interacts with CALCOCO2/NDP52, NBR1, SQSTM1/p62, TAX1BP1 and WDFY3/ALFY. Interacts with ATG8 family proteins (MAP1LC3A, MAP1LC3B, MAP1LC3C, GABARAP, GABARAPL1 and GABARAPL2). Interacts with VDAC1.

The protein resides in the mitochondrion matrix. It localises to the cytoplasm. Its function is as follows. Protein involved in mitophagy by facilitating recruitment of the autophagy machinery required for clearance of damaged mitochondria. Accumulates on the mitochondria surface in response to mitochondrial depolarization and acts as a 'eat me' signal by recruiting proteins involved in selective autophagy, such as autophagy receptors (CALCOCO2/NDP52, NBR1, SQSTM1/p62, TAX1BP1 and WDFY3/ALFY) and ATG8 family proteins (MAP1LC3A, MAP1LC3B, MAP1LC3C, GABARAP, GABARAPL1 and GABARAPL2). May act as a positive regulator of L-type calcium channels. This Mus musculus (Mouse) protein is Protein NipSnap homolog 2.